We begin with the raw amino-acid sequence, 107 residues long: Acidic phospholipase A2 2 (107 aa).

Disulfide bonds link Cys-26-Cys-100, Cys-28-Cys-38, Cys-37-Cys-82, Cys-43-Cys-107, Cys-44-Cys-75, and Cys-62-Cys-73. Residues Tyr-27, Gly-29, and Gly-31 each coordinate Ca(2+). Residue His-41 is part of the active site. Ca(2+) is bound at residue Asp-42. Asp-76 is a catalytic residue.

It depends on Ca(2+) as a cofactor. Expressed by the venom gland.

It localises to the secreted. The enzyme catalyses a 1,2-diacyl-sn-glycero-3-phosphocholine + H2O = a 1-acyl-sn-glycero-3-phosphocholine + a fatty acid + H(+). PLA2 catalyzes the calcium-dependent hydrolysis of the 2-acyl groups in 3-sn-phosphoglycerides. The chain is Acidic phospholipase A2 2 from Bothrops insularis (Golden lancehead).